A 379-amino-acid polypeptide reads, in one-letter code: 1-deoxy-D-xylulose 5-phosphate reductoisomerase (379 aa).

Positions 10, 11, 12, 13, 39, and 121 each coordinate NADPH. Lys122 provides a ligand contact to 1-deoxy-D-xylulose 5-phosphate. Residue Glu123 coordinates NADPH. Asp147 is a binding site for Mn(2+). The 1-deoxy-D-xylulose 5-phosphate site is built by Ser148, Glu149, Ser173, and His196. Glu149 contacts Mn(2+). Gly202 provides a ligand contact to NADPH. Positions 209, 214, 215, and 218 each coordinate 1-deoxy-D-xylulose 5-phosphate. Glu218 serves as a coordination point for Mn(2+).

This sequence belongs to the DXR family. The cofactor is Mg(2+). Mn(2+) serves as cofactor.

It carries out the reaction 2-C-methyl-D-erythritol 4-phosphate + NADP(+) = 1-deoxy-D-xylulose 5-phosphate + NADPH + H(+). It participates in isoprenoid biosynthesis; isopentenyl diphosphate biosynthesis via DXP pathway; isopentenyl diphosphate from 1-deoxy-D-xylulose 5-phosphate: step 1/6. Catalyzes the NADPH-dependent rearrangement and reduction of 1-deoxy-D-xylulose-5-phosphate (DXP) to 2-C-methyl-D-erythritol 4-phosphate (MEP). The polypeptide is 1-deoxy-D-xylulose 5-phosphate reductoisomerase (Chlamydia felis (strain Fe/C-56) (Chlamydophila felis)).